The sequence spans 485 residues: Glutamate--tRNA ligase (485 aa).

The short motif at 11 to 21 is the 'HIGH' region element; the sequence is PSPTGHLHIGN. The 'KMSKS' region signature appears at 252-256; the sequence is KLSKR. Lys255 is an ATP binding site.

The protein belongs to the class-I aminoacyl-tRNA synthetase family. Glutamate--tRNA ligase type 1 subfamily. In terms of assembly, monomer.

Its subcellular location is the cytoplasm. It carries out the reaction tRNA(Glu) + L-glutamate + ATP = L-glutamyl-tRNA(Glu) + AMP + diphosphate. Functionally, catalyzes the attachment of glutamate to tRNA(Glu) in a two-step reaction: glutamate is first activated by ATP to form Glu-AMP and then transferred to the acceptor end of tRNA(Glu). The chain is Glutamate--tRNA ligase from Bacillus cereus (strain ATCC 14579 / DSM 31 / CCUG 7414 / JCM 2152 / NBRC 15305 / NCIMB 9373 / NCTC 2599 / NRRL B-3711).